We begin with the raw amino-acid sequence, 75 residues long: Cytochrome c oxidase subunit 6C (75 aa).

Residues 1–13 are Mitochondrial matrix-facing; the sequence is MASEVLVKPQMRG. A helical membrane pass occupies residues 14–54; that stretch reads LLARRLRIHMVGAFLVSLGVAALYKFGVAEPRKKAYADFYK. Topologically, residues 55–75 are mitochondrial intermembrane; sequence NYSAEKDFEEMKKAGLFRSIK.

The protein belongs to the cytochrome c oxidase subunit 6c family. As to quaternary structure, component of the cytochrome c oxidase (complex IV, CIV), a multisubunit enzyme composed of 14 subunits. The complex is composed of a catalytic core of 3 subunits MT-CO1, MT-CO2 and MT-CO3, encoded in the mitochondrial DNA, and 11 supernumerary subunits COX4I, COX5A, COX5B, COX6A, COX6B, COX6C, COX7A, COX7B, COX7C, COX8 and NDUFA4, which are encoded in the nuclear genome. The complex exists as a monomer or a dimer and forms supercomplexes (SCs) in the inner mitochondrial membrane with NADH-ubiquinone oxidoreductase (complex I, CI) and ubiquinol-cytochrome c oxidoreductase (cytochrome b-c1 complex, complex III, CIII), resulting in different assemblies (supercomplex SCI(1)III(2)IV(1) and megacomplex MCI(2)III(2)IV(2)).

Its subcellular location is the mitochondrion inner membrane. It participates in energy metabolism; oxidative phosphorylation. In terms of biological role, component of the cytochrome c oxidase, the last enzyme in the mitochondrial electron transport chain which drives oxidative phosphorylation. The respiratory chain contains 3 multisubunit complexes succinate dehydrogenase (complex II, CII), ubiquinol-cytochrome c oxidoreductase (cytochrome b-c1 complex, complex III, CIII) and cytochrome c oxidase (complex IV, CIV), that cooperate to transfer electrons derived from NADH and succinate to molecular oxygen, creating an electrochemical gradient over the inner membrane that drives transmembrane transport and the ATP synthase. Cytochrome c oxidase is the component of the respiratory chain that catalyzes the reduction of oxygen to water. Electrons originating from reduced cytochrome c in the intermembrane space (IMS) are transferred via the dinuclear copper A center (CU(A)) of subunit 2 and heme A of subunit 1 to the active site in subunit 1, a binuclear center (BNC) formed by heme A3 and copper B (CU(B)). The BNC reduces molecular oxygen to 2 water molecules using 4 electrons from cytochrome c in the IMS and 4 protons from the mitochondrial matrix. The sequence is that of Cytochrome c oxidase subunit 6C (COX6C) from Plecturocebus donacophilus (Bolivian gray titi monkey).